The following is a 943-amino-acid chain: Isoleucine--tRNA ligase (943 aa).

The 'HIGH' region motif lies at 58 to 68 (PYANGNIHIGH). L-isoleucyl-5'-AMP is bound at residue glutamate 567. The short motif at 608 to 612 (KMSKS) is the 'KMSKS' region element. Lysine 611 serves as a coordination point for ATP. Zn(2+) contacts are provided by cysteine 906, cysteine 909, cysteine 926, and cysteine 929.

The protein belongs to the class-I aminoacyl-tRNA synthetase family. IleS type 1 subfamily. As to quaternary structure, monomer. The cofactor is Zn(2+).

It is found in the cytoplasm. The enzyme catalyses tRNA(Ile) + L-isoleucine + ATP = L-isoleucyl-tRNA(Ile) + AMP + diphosphate. Its function is as follows. Catalyzes the attachment of isoleucine to tRNA(Ile). As IleRS can inadvertently accommodate and process structurally similar amino acids such as valine, to avoid such errors it has two additional distinct tRNA(Ile)-dependent editing activities. One activity is designated as 'pretransfer' editing and involves the hydrolysis of activated Val-AMP. The other activity is designated 'posttransfer' editing and involves deacylation of mischarged Val-tRNA(Ile). The sequence is that of Isoleucine--tRNA ligase from Pseudomonas savastanoi pv. phaseolicola (strain 1448A / Race 6) (Pseudomonas syringae pv. phaseolicola (strain 1448A / Race 6)).